The sequence spans 78 residues: Large ribosomal subunit protein bL28 (78 aa).

The disordered stretch occupies residues 1–23 (MSRVCQVSGKRVQTGNNVSHANN). Positions 11–22 (RVQTGNNVSHAN) are enriched in polar residues.

The protein belongs to the bacterial ribosomal protein bL28 family.

This chain is Large ribosomal subunit protein bL28, found in Stenotrophomonas maltophilia (strain R551-3).